The sequence spans 371 residues: Protein IQ-DOMAIN 7 (371 aa).

A disordered region spans residues 1 to 32; that stretch reads MGGSGNWIRSLISNRKPVNDQQEKLSDKSSKK. Residues 17–29 are compositionally biased toward basic and acidic residues; that stretch reads PVNDQQEKLSDKS. IQ domains follow at residues 93 to 121 and 122 to 144; these read REWA…AVVR and IQAI…CMQA. Residues 125–141 form a calmodulin-binding region; sequence IFRGRQVRKQAAVTLRC. 2 disordered regions span residues 285–308 and 327–371; these read SGMS…PVAF and LTQS…SQRS. 2 stretches are compositionally biased toward polar residues: residues 297–308 and 327–341; these read STSSTSQSPVAF and LTQS…SGLS.

It belongs to the IQD family. In terms of assembly, binds to multiple calmodulin (CaM) in the presence of Ca(2+) and CaM-like proteins.

It is found in the nucleus. The protein localises to the nucleus envelope. It localises to the cytoplasm. Its subcellular location is the cytoskeleton. In terms of biological role, may be involved in cooperative interactions with calmodulins or calmodulin-like proteins. Recruits calmodulin proteins to microtubules, thus being a potential scaffold in cellular signaling and trafficking. May associate with nucleic acids and regulate gene expression at the transcriptional or post-transcriptional level. In Arabidopsis thaliana (Mouse-ear cress), this protein is Protein IQ-DOMAIN 7.